The primary structure comprises 140 residues: Large ribosomal subunit protein bL17 (140 aa).

This sequence belongs to the bacterial ribosomal protein bL17 family. Part of the 50S ribosomal subunit. Contacts protein L32.

The protein is Large ribosomal subunit protein bL17 of Rhizorhabdus wittichii (strain DSM 6014 / CCUG 31198 / JCM 15750 / NBRC 105917 / EY 4224 / RW1) (Sphingomonas wittichii).